The chain runs to 1383 residues: Cell surface hyaluronidase (1383 aa).

The segment at 1–76 (MYAAGSRGHS…QRTPSESRKR (76 aa)) is disordered. At 1 to 82 (MYAAGSRGHS…SRKRKRHKNT (82 aa)) the chain is on the cytoplasmic side. Phosphoserine occurs at positions 10, 53, and 63. A helical; Signal-anchor for type II membrane protein transmembrane segment spans residues 83–103 (FICFAITSFSFFVALAVILGI). Residues 104–1383 (SSKYAPDENC…DLLQQALKVL (1280 aa)) are Extracellular-facing. Residues 121 to 245 (RNWDPGQDSA…QRTSWTMLAR (125 aa)) enclose the G8 domain. A GG-type lectin 1 domain is found at 255 to 412 (GSYAFEKDFS…ISLSGFRVDI (158 aa)). Asparagine 292 carries an N-linked (GlcNAc...) asparagine glycan. PbH1 repeat units follow at residues 669-691 (HPNNHLINNAAAGSQDAGIWYLF), 711-733 (TPLGIFYNNRVHSNFKAGLFVDK), and 791-812 (GGDIIVQNSAFADNGKGLTFAS). N-linked (GlcNAc...) asparagine glycans are attached at residues asparagine 914 and asparagine 1234. One can recognise a GG-type lectin 2 domain in the interval 1208–1366 (KSYLPVRFQS…MEEYGCSRTG (159 aa)).

It belongs to the CEMIP family. Ca(2+) is required as a cofactor. Widely expressed. Strongly expressed in endothelial cells in the subcapsular sinus of lymph nodes and in the liver sinusoid, two primary sites implicated in systemic hyaluronan turnover.

Its subcellular location is the cell membrane. It catalyses the reaction Random hydrolysis of (1-&gt;4)-linkages between N-acetyl-beta-D-glucosamine and D-glucuronate residues in hyaluronate.. In terms of biological role, cell surface hyaluronidase that mediates the initial cleavage of extracellular high-molecular-weight hyaluronan into intermediate-size hyaluronan of approximately 5 kDa fragments. Very specific to hyaluronan; not able to cleave chondroitin sulfate or dermatan sulfate. Has an essential function in systemic hyaluronan catabolism and turnover and regulates cell adhesion and migration via hyaluronan degradation at focal adhesion sites. Acts as a regulator of angiogenesis and heart morphogenesis by mediating degradation of extracellular hyaluronan, thereby regulating VEGF signaling. The protein is Cell surface hyaluronidase of Mus musculus (Mouse).